We begin with the raw amino-acid sequence, 190 residues long: Small ribosomal subunit protein eS7x (190 aa).

Methionine 1 is subject to N-acetylmethionine. The stretch at 17-50 forms a coiled coil; it reads TECEEQVAQALFDLENTNQELKSELKDLYINQAV.

The protein belongs to the eukaryotic ribosomal protein eS7 family.

The protein is Small ribosomal subunit protein eS7x (RPS7C) of Arabidopsis thaliana (Mouse-ear cress).